Reading from the N-terminus, the 212-residue chain is Non-structural protein 5 (212 aa).

Asp86 serves as a coordination point for Mg(2+).

The protein belongs to the rotavirus NSP5 family. Homodimer. Interacts with VP1. Interacts with VP2. Interacts with NSP2 and NSP6. Mg(2+) serves as cofactor. O-glycosylated.

The protein localises to the host cytoplasm. In terms of biological role, plays an essential role in the viral genome replication. Participates, together with NSP2, in the formation of viral factories (viroplasms) which are large inclusions in the host cytoplasm where replication intermediates are assembled and viral RNA replication takes place. Orchestrates the recruitment of viroplasmic proteins such as capsid proteins to these factories. In Homo sapiens (Human), this protein is Non-structural protein 5.